The sequence spans 501 residues: Cobyric acid synthase (501 aa).

One can recognise a GATase cobBQ-type domain in the interval 252-443; it reads DLDVAVIDLD…LHGIFDNPYW (192 aa). The active-site Nucleophile is C333. The active site involves H435.

This sequence belongs to the CobB/CobQ family. CobQ subfamily.

It participates in cofactor biosynthesis; adenosylcobalamin biosynthesis. Functionally, catalyzes amidations at positions B, D, E, and G on adenosylcobyrinic A,C-diamide. NH(2) groups are provided by glutamine, and one molecule of ATP is hydrogenolyzed for each amidation. The protein is Cobyric acid synthase of Limosilactobacillus reuteri (strain DSM 20016) (Lactobacillus reuteri).